We begin with the raw amino-acid sequence, 112 residues long: uncharacterized protein (112 aa).

The 108-residue stretch at 5–112 (IFQKIIKGII…LLGGKKLNKI (108 aa)) folds into the HIT domain. The short motif at 98–102 (HLHLH) is the Histidine triad motif element.

This is an uncharacterized protein from Buchnera aphidicola subsp. Baizongia pistaciae (strain Bp).